The chain runs to 103 residues: Large ribosomal subunit protein bL21 (103 aa).

Belongs to the bacterial ribosomal protein bL21 family. In terms of assembly, part of the 50S ribosomal subunit. Contacts protein L20.

In terms of biological role, this protein binds to 23S rRNA in the presence of protein L20. This is Large ribosomal subunit protein bL21 from Burkholderia ambifaria (strain MC40-6).